A 595-amino-acid chain; its full sequence is Aspartate--tRNA(Asp/Asn) ligase (595 aa).

Glu-175 contributes to the L-aspartate binding site. The tract at residues 199 to 202 (QQYK) is aspartate. L-aspartate-binding residues include Arg-221 and His-454. 221 to 223 (RDE) is an ATP binding site. Glu-488 serves as a coordination point for ATP. Arg-495 is an L-aspartate binding site. An ATP-binding site is contributed by 540–543 (GIDR).

This sequence belongs to the class-II aminoacyl-tRNA synthetase family. Type 1 subfamily. As to quaternary structure, homodimer.

Its subcellular location is the cytoplasm. The enzyme catalyses tRNA(Asx) + L-aspartate + ATP = L-aspartyl-tRNA(Asx) + AMP + diphosphate. Aspartyl-tRNA synthetase with relaxed tRNA specificity since it is able to aspartylate not only its cognate tRNA(Asp) but also tRNA(Asn). Reaction proceeds in two steps: L-aspartate is first activated by ATP to form Asp-AMP and then transferred to the acceptor end of tRNA(Asp/Asn). The sequence is that of Aspartate--tRNA(Asp/Asn) ligase from Brucella anthropi (strain ATCC 49188 / DSM 6882 / CCUG 24695 / JCM 21032 / LMG 3331 / NBRC 15819 / NCTC 12168 / Alc 37) (Ochrobactrum anthropi).